A 500-amino-acid chain; its full sequence is Low-density lipoprotein receptor-related protein 11 (500 aa).

A signal peptide spans 1–37 (MASVAQESAGSQRRLPPRHGALRGLLLLCLWLPSGRA). Topologically, residues 38–450 (ALPPAAPLSE…GGEHPAPETG (413 aa)) are extracellular. The MANSC domain occupies 99–184 (AMPDAIIRTK…FALHSGYSSY (86 aa)). N-linked (GlcNAc...) asparagine glycans are attached at residues Asn-164 and Asn-291. One can recognise a PKD domain in the interval 210–305 (PLSKAGQDVV…VLRAAYSTGG (96 aa)). The 37-residue stretch at 309 to 345 (TCSRYHFFCDDGCCIDITLACDGVQQCPDGSDEDFCQ) folds into the LDL-receptor class A domain. Cystine bridges form between Cys-310–Cys-322, Cys-317–Cys-335, and Cys-329–Cys-344. The interval 358–445 (AASPALPRTT…KGDGGGGEHP (88 aa)) is disordered. Asn-401 carries an N-linked (GlcNAc...) asparagine glycan. A helical membrane pass occupies residues 451–473 (AVLPLALGLAITALLLLMVACRL). The Cytoplasmic portion of the chain corresponds to 474–500 (RLVKQKLKKARPITSEESDYLINGMYL). Ser-491 bears the Phosphoserine mark.

This sequence belongs to the LDLR family.

Its subcellular location is the membrane. The chain is Low-density lipoprotein receptor-related protein 11 (LRP11) from Homo sapiens (Human).